We begin with the raw amino-acid sequence, 573 residues long: Sulfite reductase [NADPH] hemoprotein beta-component (573 aa).

[4Fe-4S] cluster is bound by residues cysteine 438, cysteine 444, cysteine 483, and cysteine 487. Residue cysteine 487 coordinates siroheme.

Belongs to the nitrite and sulfite reductase 4Fe-4S domain family. Alpha(8)-beta(8). The alpha component is a flavoprotein, the beta component is a hemoprotein. Siroheme is required as a cofactor. It depends on [4Fe-4S] cluster as a cofactor.

It carries out the reaction hydrogen sulfide + 3 NADP(+) + 3 H2O = sulfite + 3 NADPH + 4 H(+). It participates in sulfur metabolism; hydrogen sulfide biosynthesis; hydrogen sulfide from sulfite (NADPH route): step 1/1. In terms of biological role, component of the sulfite reductase complex that catalyzes the 6-electron reduction of sulfite to sulfide. This is one of several activities required for the biosynthesis of L-cysteine from sulfate. The polypeptide is Sulfite reductase [NADPH] hemoprotein beta-component (Staphylococcus haemolyticus (strain JCSC1435)).